Reading from the N-terminus, the 253-residue chain is Small ribosomal subunit protein uS2 (253 aa).

The disordered stretch occupies residues 226–253; that stretch reads QGADNADVEKELSESVEENSAEEVDDAE. The segment covering 239 to 253 has biased composition (acidic residues); sequence ESVEENSAEEVDDAE.

This sequence belongs to the universal ribosomal protein uS2 family.

The chain is Small ribosomal subunit protein uS2 from Lactobacillus delbrueckii subsp. bulgaricus (strain ATCC 11842 / DSM 20081 / BCRC 10696 / JCM 1002 / NBRC 13953 / NCIMB 11778 / NCTC 12712 / WDCM 00102 / Lb 14).